The following is a 34-amino-acid chain: uncharacterized protein (34 aa).

This is an uncharacterized protein from Treponema pallidum (strain Nichols).